The primary structure comprises 209 residues: Small ribosomal subunit protein uS4 (209 aa).

An S4 RNA-binding domain is found at 99 to 160; sequence ARLDSVAYRM…RARASLRCKA (62 aa).

This sequence belongs to the universal ribosomal protein uS4 family. In terms of assembly, part of the 30S ribosomal subunit. Contacts protein S5. The interaction surface between S4 and S5 is involved in control of translational fidelity.

In terms of biological role, one of the primary rRNA binding proteins, it binds directly to 16S rRNA where it nucleates assembly of the body of the 30S subunit. Functionally, with S5 and S12 plays an important role in translational accuracy. The protein is Small ribosomal subunit protein uS4 of Dechloromonas aromatica (strain RCB).